We begin with the raw amino-acid sequence, 248 residues long: Polyhedrin (248 aa).

The N-terminal stretch at M1–Y27 is a signal peptide. N28, N77, N86, and N237 each carry an N-linked (GlcNAc...) asparagine; by host glycan.

It localises to the host cytoplasm. Its function is as follows. Major component of the virus occlusion bodies, which are large proteinaceous structures (polyhedra), that protect the virus from the outside environment for extended periods until they are ingested by insect larvae. This Bombyx mori cytoplasmic polyhedrosis virus (BmCPV) protein is Polyhedrin.